The following is a 368-amino-acid chain: DNA replication and repair protein RecF (368 aa).

An ATP-binding site is contributed by 30–37 (GNNAQGKT).

This sequence belongs to the RecF family.

The protein resides in the cytoplasm. Functionally, the RecF protein is involved in DNA metabolism; it is required for DNA replication and normal SOS inducibility. RecF binds preferentially to single-stranded, linear DNA. It also seems to bind ATP. The polypeptide is DNA replication and repair protein RecF (Streptococcus pyogenes serotype M5 (strain Manfredo)).